A 124-amino-acid chain; its full sequence is Small ribosomal subunit protein uS12c (124 aa).

The interval 105-124 (AGVKDRRQSRSKYGAKRPKA) is disordered. Positions 113 to 124 (SRSKYGAKRPKA) are enriched in basic residues.

It belongs to the universal ribosomal protein uS12 family. Part of the 30S ribosomal subunit.

The protein localises to the plastid. Its subcellular location is the cyanelle. With S4 and S5 plays an important role in translational accuracy. Located at the interface of the 30S and 50S subunits. The polypeptide is Small ribosomal subunit protein uS12c (rps12) (Cyanophora paradoxa).